A 485-amino-acid chain; its full sequence is Aspartyl/glutamyl-tRNA(Asn/Gln) amidotransferase subunit B (485 aa).

The protein belongs to the GatB/GatE family. GatB subfamily. In terms of assembly, heterotrimer of A, B and C subunits.

The enzyme catalyses L-glutamyl-tRNA(Gln) + L-glutamine + ATP + H2O = L-glutaminyl-tRNA(Gln) + L-glutamate + ADP + phosphate + H(+). The catalysed reaction is L-aspartyl-tRNA(Asn) + L-glutamine + ATP + H2O = L-asparaginyl-tRNA(Asn) + L-glutamate + ADP + phosphate + 2 H(+). In terms of biological role, allows the formation of correctly charged Asn-tRNA(Asn) or Gln-tRNA(Gln) through the transamidation of misacylated Asp-tRNA(Asn) or Glu-tRNA(Gln) in organisms which lack either or both of asparaginyl-tRNA or glutaminyl-tRNA synthetases. The reaction takes place in the presence of glutamine and ATP through an activated phospho-Asp-tRNA(Asn) or phospho-Glu-tRNA(Gln). This is Aspartyl/glutamyl-tRNA(Asn/Gln) amidotransferase subunit B from Anaplasma marginale (strain St. Maries).